Consider the following 326-residue polypeptide: High-affinity zinc uptake system protein ZnuA (326 aa).

A signal peptide spans 1–22 (MIRPSSLVLAAALGTAALPARA). Position 59 (His-59) interacts with Zn(2+). Positions 117–155 (GGEHEHEHEHEHEHEHEHEHDGHGHAEEQAHHDHDHSGT) are enriched in basic and acidic residues. The segment at 117–161 (GGEHEHEHEHEHEHEHEHEHDGHGHAEEQAHHDHDHSGTDPHAWL) is disordered. The Zn(2+) site is built by His-158, His-222, and Asp-295. A disulfide bond links Cys-267 and Cys-322.

This sequence belongs to the bacterial solute-binding protein 9 family. In terms of assembly, monomer.

The protein resides in the periplasm. Functionally, part of the ATP-binding cassette (ABC) transport system ZnuABC involved in zinc import. Binds zinc with high affinity and specificity and delivers it to the membrane permease for translocation into the cytoplasm. This Paracoccus denitrificans (strain Pd 1222) protein is High-affinity zinc uptake system protein ZnuA.